A 210-amino-acid polypeptide reads, in one-letter code: Urease accessory protein UreG (210 aa).

Residue 14–21 participates in GTP binding; that stretch reads GPVGSGKT.

It belongs to the SIMIBI class G3E GTPase family. UreG subfamily. In terms of assembly, homodimer. UreD, UreF and UreG form a complex that acts as a GTP-hydrolysis-dependent molecular chaperone, activating the urease apoprotein by helping to assemble the nickel containing metallocenter of UreC. The UreE protein probably delivers the nickel.

The protein localises to the cytoplasm. Functionally, facilitates the functional incorporation of the urease nickel metallocenter. This process requires GTP hydrolysis, probably effectuated by UreG. The polypeptide is Urease accessory protein UreG (Rhodopseudomonas palustris (strain BisB5)).